The following is a 246-amino-acid chain: Type III pantothenate kinase (246 aa).

11–18 (DIGNSFIK) provides a ligand contact to ATP. Substrate is bound by residues Tyr-95 and 102-105 (GVDR). The active-site Proton acceptor is Asp-104. Asp-125 lines the K(+) pocket. Thr-128 is an ATP binding site. Thr-179 serves as a coordination point for substrate.

It belongs to the type III pantothenate kinase family. As to quaternary structure, homodimer. Requires NH4(+) as cofactor. It depends on K(+) as a cofactor.

It localises to the cytoplasm. The enzyme catalyses (R)-pantothenate + ATP = (R)-4'-phosphopantothenate + ADP + H(+). Its pathway is cofactor biosynthesis; coenzyme A biosynthesis; CoA from (R)-pantothenate: step 1/5. Its function is as follows. Catalyzes the phosphorylation of pantothenate (Pan), the first step in CoA biosynthesis. This Pseudoalteromonas atlantica (strain T6c / ATCC BAA-1087) protein is Type III pantothenate kinase.